The sequence spans 233 residues: Demethylmenaquinone methyltransferase (233 aa).

S-adenosyl-L-methionine is bound by residues threonine 60, aspartate 81, and 106-107 (DA).

This sequence belongs to the class I-like SAM-binding methyltransferase superfamily. MenG/UbiE family.

The catalysed reaction is a 2-demethylmenaquinol + S-adenosyl-L-methionine = a menaquinol + S-adenosyl-L-homocysteine + H(+). It functions in the pathway quinol/quinone metabolism; menaquinone biosynthesis; menaquinol from 1,4-dihydroxy-2-naphthoate: step 2/2. Its function is as follows. Methyltransferase required for the conversion of demethylmenaquinol (DMKH2) to menaquinol (MKH2). This Staphylococcus saprophyticus subsp. saprophyticus (strain ATCC 15305 / DSM 20229 / NCIMB 8711 / NCTC 7292 / S-41) protein is Demethylmenaquinone methyltransferase.